Here is a 229-residue protein sequence, read N- to C-terminus: Flagellar L-ring protein (229 aa).

The signal sequence occupies residues 1 to 20 (MLKTVLRLPVCAALLALAAG). The N-palmitoyl cysteine moiety is linked to residue Cys-21. Cys-21 carries S-diacylglycerol cysteine lipidation.

It belongs to the FlgH family. As to quaternary structure, the basal body constitutes a major portion of the flagellar organelle and consists of four rings (L,P,S, and M) mounted on a central rod.

Its subcellular location is the cell outer membrane. The protein localises to the bacterial flagellum basal body. In terms of biological role, assembles around the rod to form the L-ring and probably protects the motor/basal body from shearing forces during rotation. This is Flagellar L-ring protein from Bordetella pertussis (strain Tohama I / ATCC BAA-589 / NCTC 13251).